The following is a 953-amino-acid chain: Homeobox protein LUMINIDEPENDENS (953 aa).

The homeobox DNA-binding region spans 63–123 (KIGKRPRDLL…VTQKTRVRKQ (61 aa)). The disordered stretch occupies residues 404-430 (EQPGQKAAGKSPQTVRIGTSGRSRPMS). Positions 414 to 425 (SPQTVRIGTSGR) are enriched in polar residues. Tandem repeats lie at residues 498–502 (QPVNG), 507–511 (QPVNG), 516–520 (QPVNG), 525–529 (QPVNG), and 534–538 (QPVNG). The segment at 498–538 (QPVNGFSTIQPVNGPSAVQPVNGPLAVQPVNGPSALQPVNG) is 5 X 5 AA repeats of Q-P-V-N-G. 3 disordered regions span residues 606–668 (NSKE…EPQD), 733–763 (APNSSSSSNKQVEERVEVSLPSPTPSTNPGM), and 861–953 (VGQM…KRWR). Residues 608–623 (KEADVQRNRNRRERET) are compositionally biased toward basic and acidic residues. Residues 651 to 661 (PEIPSQQPPEE) show a composition bias toward low complexity. Residues 733-742 (APNSSSSSNK) are compositionally biased toward polar residues. Positions 869-884 (SSSWRSQQSQNSYYSH) are enriched in low complexity. Polar residues-rich tracts occupy residues 888 to 934 (EIAS…QQQA) and 942 to 953 (THPYWNQNKRWR).

In terms of assembly, interacts with SUF4. As to expression, expressed in shoot apex, root apex, leaf primordia and floral buds.

It localises to the nucleus. Seems to play a role in the regulation of flowering time in the autonomous flowering pathway by repressing FLOWERING LOCUS C expression. This Arabidopsis thaliana (Mouse-ear cress) protein is Homeobox protein LUMINIDEPENDENS (LD).